The sequence spans 530 residues: Vesicular acetylcholine transporter (530 aa).

Residues 1-33 (MEPTAPTGQARAAATKLSEAVGAALQEPQRQRR) lie on the Cytoplasmic side of the membrane. A helical transmembrane segment spans residues 34–54 (LVLVIVCVALLLDNMLYMVIV). Topologically, residues 55–125 (PIVPDYIAHM…PTESEDVKIG (71 aa)) are lumenal, vesicle. N-linked (GlcNAc...) asparagine glycans are attached at residues Asn89 and Asn96. The chain crosses the membrane as a helical span at residues 126 to 146 (VLFASKAILQLLVNPLSGPFI). Residues 147–152 (DRMSYD) are Cytoplasmic-facing. The chain crosses the membrane as a helical span at residues 153-173 (VPLLIGLGVMFASTVMFAFAE). The Lumenal, vesicle segment spans residues 174–182 (DYATLFAAR). A helical membrane pass occupies residues 183–203 (SLQGLGSAFADTSGIAMIADK). Over 204 to 213 (YPEEPERSRA) the chain is Cytoplasmic. The helical transmembrane segment at 214–234 (LGVALAFISFGSLVAPPFGGI) threads the bilayer. The Lumenal, vesicle segment spans residues 235–242 (LYEFAGKR). The chain crosses the membrane as a helical span at residues 243-263 (VPFLVLAAVSLFDALLLLAVA). The Cytoplasmic portion of the chain corresponds to 264-289 (KPFSAAARARANLPVGTPIHRLMLDP). The helical transmembrane segment at 290-310 (YIAVVAGALTTCNIPLAFLEP) threads the bilayer. At 311 to 325 (TIATWMKHTMAASEW) the chain is on the lumenal, vesicle side. The chain crosses the membrane as a helical span at residues 326–346 (EMGMVWLPAFVPHVLGVYLTV). The Cytoplasmic segment spans residues 347–356 (RLAARYPHLQ). The chain crosses the membrane as a helical span at residues 357–377 (WLYGALGLAVIGVSSCVVPAC). Residues 378 to 388 (RSFAPLVVSLC) are Lumenal, vesicle-facing. Residues 389 to 409 (GLCFGIALVDTALLPTLAFLV) traverse the membrane as a helical segment. The Cytoplasmic segment spans residues 410-422 (DVRHVSVYGSVYA). The helical transmembrane segment at 423–443 (IADISYSVAYALGPIVAGHIV) threads the bilayer. Over 444–447 (HSLG) the chain is Lumenal, vesicle. Residues 448 to 468 (FEQLSLGMGLANLLYAPVLLL) traverse the membrane as a helical segment. Residues 469–530 (LRNVGLLTRS…EDDYNYYSRS (62 aa)) are Cytoplasmic-facing. The interval 471–530 (NVGLLTRSRSERDVLLDEPPQGLYDAVRLREVQGKDGGEPCSPPGPFDGCEDDYNYYSRS) is mediates interaction with SEC14L1. The tract at residues 504–530 (GKDGGEPCSPPGPFDGCEDDYNYYSRS) is disordered.

This sequence belongs to the major facilitator superfamily. Vesicular transporter family. As to quaternary structure, interacts with SEC14L1. High expression in all major cholinergic cell groups, including peripheral postganglionic parasympathetic cells, preganglionic sympathetic and parasympathetic cells, ventral spinal cord and brainstem motoneurons, cell groups in the basal forebrain, the habenula and the corpus striatum. Weakly expressed in the cortex and hippocampus.

The protein resides in the cytoplasmic vesicle. Its subcellular location is the secretory vesicle. It is found in the synaptic vesicle membrane. The catalysed reaction is acetylcholine(out) + 2 H(+)(in) = acetylcholine(in) + 2 H(+)(out). The enzyme catalyses choline(in) + 2 H(+)(out) = choline(out) + 2 H(+)(in). It catalyses the reaction serotonin(in) + 2 H(+)(out) = serotonin(out) + 2 H(+)(in). Potently inhibited by L-vesamicol. In terms of biological role, electrogenic antiporter that exchanges one cholinergic neurotransmitter, acetylcholine or choline, with two intravesicular protons across the membrane of synaptic vesicles. Uses the electrochemical proton gradient established by the V-type proton-pump ATPase to store neurotransmitters inside the vesicles prior to their release via exocytosis. Determines cholinergic vesicular quantal size at presynaptic nerve terminals in developing neuro-muscular junctions with an impact on motor neuron differentiation and innervation pattern. Part of forebrain cholinergic system, regulates hippocampal synapse transmissions that underlie spatial memory formation. Can transport serotonin. This Rattus norvegicus (Rat) protein is Vesicular acetylcholine transporter (Slc18a3).